The following is a 432-amino-acid chain: Alpha-ketoglutarate permease (432 aa).

The Cytoplasmic portion of the chain corresponds to 1-32 (MAESTVTADSKLTSSDTRRRIWAIVGASSGNL). A helical transmembrane segment spans residues 33–53 (VEWFDFYVYSFCSLYFAHIFF). Topologically, residues 54-62 (PSGNTTTQL) are periplasmic. A helical transmembrane segment spans residues 63 to 83 (LQTAGVFAAGFLMRPIGGWLF). Topologically, residues 84–95 (GRIADKHGRKKS) are cytoplasmic. A helical transmembrane segment spans residues 96–116 (MLLSVCMMCFGSLVIACLPGY). Residues 117 to 118 (ET) are Periplasmic-facing. Residues 119–139 (IGTWAPALLLLARLFQGLSVG) form a helical membrane-spanning segment. Over 140–162 (GEYGTSATYMSEVAVEGRKGFYA) the chain is Cytoplasmic. Residues 163-183 (SFQYVTLIGGQLLALLVVVVL) form a helical membrane-spanning segment. Over 184–193 (QHTMEDAALR) the chain is Periplasmic. A helical membrane pass occupies residues 194–214 (EWGWRIPFALGAVLAVVALWL). Residues 215 to 243 (RRQLDETSQQETRALKEAGSLKGLWRNRR) lie on the Cytoplasmic side of the membrane. The chain crosses the membrane as a helical span at residues 244–264 (AFIMVLGFTAAGSLCFYTFTT). Topologically, residues 265–279 (YMQKYLVNTAGMHAN) are periplasmic. A helical membrane pass occupies residues 280–300 (VASGIMTAALFVFMLIQPLIG). The Cytoplasmic portion of the chain corresponds to 301 to 309 (ALSDKIGRR). A helical transmembrane segment spans residues 310–330 (TSMLCFGSLAAIFTVPILSAL). Over 331–339 (QNVSSPYAA) the chain is Periplasmic. The chain crosses the membrane as a helical span at residues 340 to 360 (FGLVMCALLIVSFYTSISGIL). At 361 to 373 (KAEMFPAQVRALG) the chain is on the cytoplasmic side. The helical transmembrane segment at 374 to 394 (VGLSYAVANAIFGGSAEYVAL) threads the bilayer. The Periplasmic portion of the chain corresponds to 395–402 (SLKSIGME). The chain crosses the membrane as a helical span at residues 403–423 (TAFFWYVTLMAVVAFLVSLML). The Cytoplasmic segment spans residues 424 to 432 (HRKGKGMRL).

This sequence belongs to the major facilitator superfamily. Metabolite:H+ Symporter (MHS) family (TC 2.A.1.6) family.

The protein localises to the cell inner membrane. Functionally, uptake of alpha-ketoglutarate across the boundary membrane with the concomitant import of a cation (symport system). This is Alpha-ketoglutarate permease (kgtP) from Escherichia coli (strain K12).